A 538-amino-acid polypeptide reads, in one-letter code: Poly [ADP-ribose] polymerase 2 (538 aa).

A WGR domain is found at 1 to 94 (MSIINDENGR…RDDEPVPNKY (94 aa)). The segment at 104 to 133 (RQTEKEVKKEEPEPEPKVDEKNTRGRKKRG) is disordered. Over residues 105-126 (QTEKEVKKEEPEPEPKVDEKNT) the composition is skewed to basic and acidic residues. In terms of domain architecture, PARP alpha-helical spans 148–285 (VEEVNEKLKE…GSIEASLELK (138 aa)). The PARP catalytic domain maps to 309–535 (EPVSEEIAGK…VKVDRLTAKE (227 aa)). Residues 357 to 381 (QEVPKKRGRKSTKTAAPTVPPPTTK) form a disordered region.

Belongs to the ARTD/PARP family.

It localises to the nucleus. It carries out the reaction NAD(+) + (ADP-D-ribosyl)n-acceptor = nicotinamide + (ADP-D-ribosyl)n+1-acceptor + H(+).. The enzyme catalyses L-aspartyl-[protein] + NAD(+) = 4-O-(ADP-D-ribosyl)-L-aspartyl-[protein] + nicotinamide. The catalysed reaction is L-glutamyl-[protein] + NAD(+) = 5-O-(ADP-D-ribosyl)-L-glutamyl-[protein] + nicotinamide. Its activity is regulated as follows. Inhibited by N-(6-oxo-5,6-dihydrophenanthridin-2-yl)-N,N-dimethylacetamide HCl (PJ34), 1,5-dihydroxyisoquinoline (DHQ) and 3-aminobenzamide (3AB). Poly[ADP-ribose] polymerase modifies various nuclear proteins by poly(ADP-ribosyl)ation, a post-translational modification synthesized after DNA damage that appears as an obligatory step in a detection/signaling pathway leading to the reparation of DNA strand breaks and programmed cell death. This Caenorhabditis elegans protein is Poly [ADP-ribose] polymerase 2.